Reading from the N-terminus, the 86-residue chain is Exopolysaccharide production repressor protein (86 aa).

The chain crosses the membrane as a helical span at residues 18-38 (FAVTLAASVFLQVVYFLSLLF). The tract at residues 44–86 (TRESDRSIHSGTRQADQPQKRDRDKTEQSNVPKLDPRRKRRTP) is disordered. The span at 61–70 (PQKRDRDKTE) shows a compositional bias: basic and acidic residues.

It is found in the cell membrane. The protein operates within glycan metabolism; exopolysaccharide biosynthesis. Inhibition of exopolysaccharide synthesis (EPS) and nodulation ability (NOD). This Rhizobium leguminosarum bv. phaseoli protein is Exopolysaccharide production repressor protein (exoX).